The sequence spans 70 residues: Mu-conotoxin PnIVB (70 aa).

Positions 1 to 20 are cleaved as a signal peptide; sequence MMSKLGVLLIICLLLCPLTA. The propeptide occupies 21–51; sequence VPQDGDQPADQPAERMQDDISSEHHPFFDPV.

Post-translationally, contains 3 disulfide bonds. They are not added, since framework IV presents two different connectivities (I-V, II-III, IV-VI and I-III, II-V, IV-VI). In terms of tissue distribution, expressed by the venom duct.

It localises to the secreted. Its function is as follows. Mu-conotoxins block voltage-gated sodium channels (Nav). Blocks reversibly sodium channels in molluskan neurons, but has no effect on sodium currents in bovine chromaffin cells or in rat brain synaptosomes. Induces paralysis in bivalve mollusks (Mytilus). No effect are observed on fish (Gambusia) and fly larvae (Sarcophaga). Is approximately 6 times more potent than PnIVA in blockade of the sodium current in Lymnaea neurons. In Conus pennaceus (Feathered cone), this protein is Mu-conotoxin PnIVB.